Reading from the N-terminus, the 242-residue chain is uncharacterized protein (242 aa).

It localises to the cytoplasm. The protein resides in the nucleus. This is an uncharacterized protein from Schizosaccharomyces pombe (strain 972 / ATCC 24843) (Fission yeast).